A 207-amino-acid chain; its full sequence is Thiamine-phosphate synthase (207 aa).

Residues 41 to 45 (QLRLK) and N73 contribute to the 4-amino-2-methyl-5-(diphosphooxymethyl)pyrimidine site. Residues D74 and D93 each coordinate Mg(2+). T111 contributes to the 4-amino-2-methyl-5-(diphosphooxymethyl)pyrimidine binding site. 2-[(2R,5Z)-2-carboxy-4-methylthiazol-5(2H)-ylidene]ethyl phosphate is bound at residue 138-140 (TKT). Residue K141 coordinates 4-amino-2-methyl-5-(diphosphooxymethyl)pyrimidine. G168 is a 2-[(2R,5Z)-2-carboxy-4-methylthiazol-5(2H)-ylidene]ethyl phosphate binding site.

Belongs to the thiamine-phosphate synthase family. It depends on Mg(2+) as a cofactor.

It catalyses the reaction 2-[(2R,5Z)-2-carboxy-4-methylthiazol-5(2H)-ylidene]ethyl phosphate + 4-amino-2-methyl-5-(diphosphooxymethyl)pyrimidine + 2 H(+) = thiamine phosphate + CO2 + diphosphate. It carries out the reaction 2-(2-carboxy-4-methylthiazol-5-yl)ethyl phosphate + 4-amino-2-methyl-5-(diphosphooxymethyl)pyrimidine + 2 H(+) = thiamine phosphate + CO2 + diphosphate. The catalysed reaction is 4-methyl-5-(2-phosphooxyethyl)-thiazole + 4-amino-2-methyl-5-(diphosphooxymethyl)pyrimidine + H(+) = thiamine phosphate + diphosphate. The protein operates within cofactor biosynthesis; thiamine diphosphate biosynthesis; thiamine phosphate from 4-amino-2-methyl-5-diphosphomethylpyrimidine and 4-methyl-5-(2-phosphoethyl)-thiazole: step 1/1. Functionally, condenses 4-methyl-5-(beta-hydroxyethyl)thiazole monophosphate (THZ-P) and 2-methyl-4-amino-5-hydroxymethyl pyrimidine pyrophosphate (HMP-PP) to form thiamine monophosphate (TMP). The chain is Thiamine-phosphate synthase from Pelagibacter ubique (strain HTCC1062).